The chain runs to 132 residues: Extracellular small neutral protease (132 aa).

2 residues coordinate Ca(2+): D76 and T78. H83 lines the Zn(2+) pocket. E84 is a catalytic residue. 2 residues coordinate Zn(2+): H87 and D93. Cysteines 99 and 112 form a disulfide.

Belongs to the peptidase M7 family. Requires Ca(2+) as cofactor. Zn(2+) is required as a cofactor.

Its subcellular location is the secreted. It carries out the reaction Hydrolyzes proteins with a preference for Tyr or Phe in the P1' position. Has no action on amino-acid p-nitroanilides.. Functionally, specifically hydrolyzes the peptide bond at the imino side of aromatic residues. The chain is Extracellular small neutral protease (snpA) from Streptomyces caespitosus.